Consider the following 550-residue polypeptide: Glucose-6-phosphate isomerase (550 aa).

Glutamate 357 (proton donor) is an active-site residue. Catalysis depends on residues histidine 389 and lysine 509.

Belongs to the GPI family.

It is found in the cytoplasm. It carries out the reaction alpha-D-glucose 6-phosphate = beta-D-fructose 6-phosphate. Its pathway is carbohydrate biosynthesis; gluconeogenesis. It participates in carbohydrate degradation; glycolysis; D-glyceraldehyde 3-phosphate and glycerone phosphate from D-glucose: step 2/4. Catalyzes the reversible isomerization of glucose-6-phosphate to fructose-6-phosphate. This Anaeromyxobacter dehalogenans (strain 2CP-C) protein is Glucose-6-phosphate isomerase.